The primary structure comprises 218 residues: Regulator of G-protein signaling 20 (218 aa).

Residues 1–10 show a composition bias toward basic and acidic residues; it reads MGSERTEMRK. The disordered stretch occupies residues 1–26; that stretch reads MGSERTEMRKRQMAATQETPGTAQAQ. Residues 14-26 show a composition bias toward polar residues; sequence AATQETPGTAQAQ. Positions 92-208 constitute an RGS domain; sequence SFDKLMLTPA…MNSAIYKDLL (117 aa).

Forms a complex with G(alpha)z/i2 subunits and mu-opioid receptors; the formation of this complex results in mu-opioid receptor desensitization. Interacts with OPRM1. Post-translationally, fatty acylated. Heavily palmitoylated in the cysteine string motif. In terms of processing, N- and O-glycosylated in synapsomal membranes. Sumoylated by SUMO1 and SUM02 in synaptosomes. The sumoylated forms act as a scaffold for sequestering mu-opioid receptor-activated G(alpha) subunits.

The protein resides in the membrane. It localises to the nucleus. Its subcellular location is the cytoplasm. Its function is as follows. Inhibits signal transduction by increasing the GTPase activity of G protein alpha subunits thereby driving them into their inactive GDP-bound form. Binds selectively to G(z)-alpha and G(alpha)-i2 subunits, accelerates their GTPase activity and regulates their signaling activities. The G(z)-alpha activity is inhibited by the phosphorylation and palmitoylation of the G-protein. Negatively regulates mu-opioid receptor-mediated activation of the G-proteins. In Gallus gallus (Chicken), this protein is Regulator of G-protein signaling 20 (RGS20).